We begin with the raw amino-acid sequence, 529 residues long: Bifunctional purine biosynthesis protein PurH (529 aa).

An MGS-like domain is found at 1–148 (MQQRRPVRRA…KNHKDVAIVV (148 aa)). N6-acetyllysine is present on lysine 287.

The protein belongs to the PurH family.

It catalyses the reaction (6R)-10-formyltetrahydrofolate + 5-amino-1-(5-phospho-beta-D-ribosyl)imidazole-4-carboxamide = 5-formamido-1-(5-phospho-D-ribosyl)imidazole-4-carboxamide + (6S)-5,6,7,8-tetrahydrofolate. The enzyme catalyses IMP + H2O = 5-formamido-1-(5-phospho-D-ribosyl)imidazole-4-carboxamide. It functions in the pathway purine metabolism; IMP biosynthesis via de novo pathway; 5-formamido-1-(5-phospho-D-ribosyl)imidazole-4-carboxamide from 5-amino-1-(5-phospho-D-ribosyl)imidazole-4-carboxamide (10-formyl THF route): step 1/1. The protein operates within purine metabolism; IMP biosynthesis via de novo pathway; IMP from 5-formamido-1-(5-phospho-D-ribosyl)imidazole-4-carboxamide: step 1/1. This chain is Bifunctional purine biosynthesis protein PurH, found in Escherichia coli (strain 55989 / EAEC).